The following is a 209-amino-acid chain: ATP-dependent Clp protease proteolytic subunit 2 (209 aa).

Ser-106 acts as the Nucleophile in catalysis. His-131 is an active-site residue.

It belongs to the peptidase S14 family. As to quaternary structure, fourteen ClpP subunits assemble into 2 heptameric rings which stack back to back to give a disk-like structure with a central cavity, resembling the structure of eukaryotic proteasomes.

Its subcellular location is the cytoplasm. The catalysed reaction is Hydrolysis of proteins to small peptides in the presence of ATP and magnesium. alpha-casein is the usual test substrate. In the absence of ATP, only oligopeptides shorter than five residues are hydrolyzed (such as succinyl-Leu-Tyr-|-NHMec, and Leu-Tyr-Leu-|-Tyr-Trp, in which cleavage of the -Tyr-|-Leu- and -Tyr-|-Trp bonds also occurs).. Its function is as follows. Cleaves peptides in various proteins in a process that requires ATP hydrolysis. Has a chymotrypsin-like activity. Plays a major role in the degradation of misfolded proteins. In Rhizobium etli (strain ATCC 51251 / DSM 11541 / JCM 21823 / NBRC 15573 / CFN 42), this protein is ATP-dependent Clp protease proteolytic subunit 2.